The primary structure comprises 1299 residues: MAP3K epsilon protein kinase 1 (1299 aa).

One can recognise a Protein kinase domain in the interval 20 to 274 (YMLGDEIGKG…AKTLLSHPWI (255 aa)). HEAT repeat units lie at residues 25 to 62 (EIGK…EDLN) and 86 to 125 (LKTK…TVYI). Residues 26–34 (IGKGAYGRV) and Lys-49 each bind ATP. Asp-144 functions as the Proton acceptor in the catalytic mechanism. The stretch at 218-256 (PYYDLQPMPALFRIVQDDSPPIPDSLSPDITDFLRQCFK) is one HEAT 3 repeat. Disordered regions lie at residues 291–458 (IRYM…GNEL) and 483–509 (GKLN…DGGK). The span at 374–385 (SSLQSSTCSISS) shows a compositional bias: low complexity. Polar residues-rich tracts occupy residues 415–432 (ATKQ…QRSH) and 488–501 (ASAS…NQGD). HEAT repeat units lie at residues 532-570 (SNDG…LLPL), 611-649 (VFVT…DNID), 653-694 (NACL…SSSL), 698-736 (MFIA…VFKL), 743-780 (NDFC…SGQL), 781-820 (DQHE…PDGD), 868-900 (QPEQ…HIAG), 901-939 (LEKH…AASA), 955-994 (SDTS…ADTT), 998-1036 (YMCS…DPNC), 1043-1081 (ADAI…INKR), 1085-1122 (QAAE…ASRN), 1125-1164 (EQLR…NDNR), 1186-1210 (CPER…RINT), 1211-1249 (TLAV…HHPR), and 1279-1299 (QVLV…NTVL). The interval 795-852 (VLKTRPGGGEEPSNSQRSDLYQPDGDRPRSSSAALDATEDVKQHHRISISSNRTSTDK) is disordered.

The protein belongs to the protein kinase superfamily. Ser/Thr protein kinase family. Post-translationally, autophosphorylated. As to expression, expressed in both the sporophytic and the gametophytic tissues, especially in dividing cells.

Its subcellular location is the cytoplasm. It is found in the cytoskeleton. It localises to the microtubule organizing center. The protein localises to the nucleus. The protein resides in the nucleolus. Its subcellular location is the cell membrane. It catalyses the reaction L-seryl-[protein] + ATP = O-phospho-L-seryl-[protein] + ADP + H(+). The enzyme catalyses L-threonyl-[protein] + ATP = O-phospho-L-threonyl-[protein] + ADP + H(+). Functionally, serine/threonine-protein kinase involved in the spatial and temporal control system organizing cortical activities in mitotic and postmitotic cells. Required for the normal functioning of the plasma membrane in developing pollen. Involved in the regulation of cell expansion and embryo development. This is MAP3K epsilon protein kinase 1 from Brassica napus (Rape).